We begin with the raw amino-acid sequence, 99 residues long: Small integral membrane protein 9 (99 aa).

The signal sequence occupies residues Met1 to Ser26. Residues Ser27–Ala73 are Extracellular-facing. A helical transmembrane segment spans residues Ile74–Val94. At Val95–His99 the chain is on the cytoplasmic side.

The protein localises to the cell membrane. This Homo sapiens (Human) protein is Small integral membrane protein 9 (SMIM9).